We begin with the raw amino-acid sequence, 144 residues long: Transcription antitermination protein NusB (144 aa).

This sequence belongs to the NusB family.

In terms of biological role, involved in transcription antitermination. Required for transcription of ribosomal RNA (rRNA) genes. Binds specifically to the boxA antiterminator sequence of the ribosomal RNA (rrn) operons. This Paraburkholderia phytofirmans (strain DSM 17436 / LMG 22146 / PsJN) (Burkholderia phytofirmans) protein is Transcription antitermination protein NusB.